The primary structure comprises 635 residues: Biosynthetic arginine decarboxylase (635 aa).

The residue at position 100 (K100) is an N6-(pyridoxal phosphate)lysine. L282 to Y292 contacts substrate.

It belongs to the Orn/Lys/Arg decarboxylase class-II family. SpeA subfamily. It depends on Mg(2+) as a cofactor. Requires pyridoxal 5'-phosphate as cofactor.

It catalyses the reaction L-arginine + H(+) = agmatine + CO2. The protein operates within amine and polyamine biosynthesis; agmatine biosynthesis; agmatine from L-arginine: step 1/1. Catalyzes the biosynthesis of agmatine from arginine. The chain is Biosynthetic arginine decarboxylase from Trichlorobacter lovleyi (strain ATCC BAA-1151 / DSM 17278 / SZ) (Geobacter lovleyi).